The sequence spans 33 residues: uncharacterized protein (33 aa).

The interval 1 to 24 (MRTGTRCDLGELSHPRKTLPPRGM) is disordered.

This is an uncharacterized protein from Treponema pallidum (strain Nichols).